The sequence spans 315 residues: Homoserine O-succinyltransferase (315 aa).

C142 functions as the Acyl-thioester intermediate in the catalytic mechanism. Substrate is bound by residues K163 and S192. H235 acts as the Proton acceptor in catalysis. The active site involves E237. R249 serves as a coordination point for substrate. Over residues 249–258 the composition is skewed to basic and acidic residues; that stretch reads RDCEKSDNAP. The interval 249-271 is disordered; the sequence is RDCEKSDNAPKPENYFPDDDATK.

It belongs to the MetA family.

It localises to the cytoplasm. The catalysed reaction is L-homoserine + succinyl-CoA = O-succinyl-L-homoserine + CoA. It functions in the pathway amino-acid biosynthesis; L-methionine biosynthesis via de novo pathway; O-succinyl-L-homoserine from L-homoserine: step 1/1. Transfers a succinyl group from succinyl-CoA to L-homoserine, forming succinyl-L-homoserine. The protein is Homoserine O-succinyltransferase of Pseudoalteromonas translucida (strain TAC 125).